The sequence spans 192 residues: Anthranilate synthase component 2 (192 aa).

Residues 3-192 (DILLLDNIDS…LEQTLAWALA (190 aa)) enclose the Glutamine amidotransferase type-1 domain. Residue 57–59 (GPG) participates in L-glutamine binding. C84 acts as the Nucleophile; for GATase activity in catalysis. Residues Q88 and 134–135 (SL) contribute to the L-glutamine site. Catalysis depends on for GATase activity residues H170 and E172.

In terms of assembly, heterotetramer consisting of two non-identical subunits: a beta subunit (TrpG) and a large alpha subunit (TrpE).

It carries out the reaction chorismate + L-glutamine = anthranilate + pyruvate + L-glutamate + H(+). Its pathway is amino-acid biosynthesis; L-tryptophan biosynthesis; L-tryptophan from chorismate: step 1/5. In terms of biological role, part of a heterotetrameric complex that catalyzes the two-step biosynthesis of anthranilate, an intermediate in the biosynthesis of L-tryptophan. In the first step, the glutamine-binding beta subunit (TrpG) of anthranilate synthase (AS) provides the glutamine amidotransferase activity which generates ammonia as a substrate that, along with chorismate, is used in the second step, catalyzed by the large alpha subunit of AS (TrpE) to produce anthranilate. In the absence of TrpG, TrpE can synthesize anthranilate directly from chorismate and high concentrations of ammonia. The polypeptide is Anthranilate synthase component 2 (trpG) (Yersinia pestis).